The primary structure comprises 151 residues: Calcium-binding protein SPEC 2C (151 aa).

EF-hand domains lie at 10–45, 46–78, 81–116, and 118–151; these read EQRKVFKSSFKSIDADGDGKITPEELKAAFKSIEIE, LTQEKIDEMMSMVDKDGSRPVDFSEILMKKAEQ, GKGAQYFKAFDALDTDKSGSLSPEELRTALSACTDP, and MTKEEIDAIIKKADGNNDGEIRRAEFVRMIQSSY. The Ca(2+) site is built by D23, D25, D27, K29, E34, D59, D61, S63, E70, D94, D96, S98, S100, E105, D131, D135, E137, and E142.

In terms of tissue distribution, found in cell lineages giving rise to the aboral ectoderm, a squamous epithelium covering the surface of the late stage embryo and larva.

Its function is as follows. Calcium-binding protein involved in larval development and metamorphosis. Likely to function as calcium buffers mediating the transport of calcium from the sea water to the blastocoel where calcium is required for skeleton formation. This chain is Calcium-binding protein SPEC 2C (SPEC2C), found in Strongylocentrotus purpuratus (Purple sea urchin).